The primary structure comprises 314 residues: tRNA selenocysteine 1-associated protein 1 (314 aa).

RRM domains lie at 2-85 and 94-173; these read NSLW…RSNY and FSLF…LASS.

This sequence belongs to the RRM TRSPAP family.

The protein localises to the nucleus. The protein resides in the cytoplasm. Involved in the early steps of selenocysteine biosynthesis and tRNA(Sec) charging to the later steps resulting in the cotranslational incorporation of selenocysteine into selenoproteins. The protein is tRNA selenocysteine 1-associated protein 1 of Danio rerio (Zebrafish).